A 288-amino-acid chain; its full sequence is Bifunctional protein FolD (288 aa).

NADP(+) is bound by residues 166–168 (GAS) and I232.

This sequence belongs to the tetrahydrofolate dehydrogenase/cyclohydrolase family. As to quaternary structure, homodimer.

It carries out the reaction (6R)-5,10-methylene-5,6,7,8-tetrahydrofolate + NADP(+) = (6R)-5,10-methenyltetrahydrofolate + NADPH. The enzyme catalyses (6R)-5,10-methenyltetrahydrofolate + H2O = (6R)-10-formyltetrahydrofolate + H(+). The protein operates within one-carbon metabolism; tetrahydrofolate interconversion. Its function is as follows. Catalyzes the oxidation of 5,10-methylenetetrahydrofolate to 5,10-methenyltetrahydrofolate and then the hydrolysis of 5,10-methenyltetrahydrofolate to 10-formyltetrahydrofolate. The protein is Bifunctional protein FolD of Escherichia coli O8 (strain IAI1).